The primary structure comprises 245 residues: 1-(5-phosphoribosyl)-5-[(5-phosphoribosylamino)methylideneamino] imidazole-4-carboxamide isomerase (245 aa).

The Proton acceptor role is filled by Asp7. Residue Asp129 is the Proton donor of the active site.

It belongs to the HisA/HisF family.

It is found in the cytoplasm. It carries out the reaction 1-(5-phospho-beta-D-ribosyl)-5-[(5-phospho-beta-D-ribosylamino)methylideneamino]imidazole-4-carboxamide = 5-[(5-phospho-1-deoxy-D-ribulos-1-ylimino)methylamino]-1-(5-phospho-beta-D-ribosyl)imidazole-4-carboxamide. It participates in amino-acid biosynthesis; L-histidine biosynthesis; L-histidine from 5-phospho-alpha-D-ribose 1-diphosphate: step 4/9. The protein is 1-(5-phosphoribosyl)-5-[(5-phosphoribosylamino)methylideneamino] imidazole-4-carboxamide isomerase of Escherichia coli (strain 55989 / EAEC).